The sequence spans 357 residues: Protein Wnt-8c (357 aa).

The first 16 residues, 1–16 (MRGSTFLLLSIVGIYG), serve as a signal peptide directing secretion. Cysteine 55 and cysteine 66 are joined by a disulfide. N-linked (GlcNAc...) asparagine glycosylation occurs at asparagine 104. Cystine bridges form between cysteine 105–cysteine 113, cysteine 115–cysteine 133, cysteine 181–cysteine 195, cysteine 183–cysteine 190, cysteine 260–cysteine 298, cysteine 276–cysteine 291, cysteine 313–cysteine 328, cysteine 315–cysteine 325, and cysteine 320–cysteine 321. Serine 187 is lipidated: O-palmitoleoyl serine. N-linked (GlcNAc...) asparagine glycans are attached at residues asparagine 263 and asparagine 282. A glycan (N-linked (GlcNAc...) asparagine) is linked at asparagine 346.

It belongs to the Wnt family. In terms of processing, palmitoleoylation is required for efficient binding to frizzled receptors. Depalmitoleoylation leads to Wnt signaling pathway inhibition. Post-translationally, proteolytic processing by tiki1 and tiki2 promotes oxidation and formation of large disulfide-bond oligomers, leading to inactivation of wnt8c. Cells that form rhombomere 4. Hensen node and the neural plate immediately anterior to it.

It localises to the secreted. It is found in the extracellular space. The protein localises to the extracellular matrix. Functionally, ligand for members of the frizzled family of seven transmembrane receptors. Probable developmental protein. Is likely to signal over only few cell diameters. May be involved in the regulation of axis formation and in the rhombomere specification. This chain is Protein Wnt-8c (WNT8C), found in Gallus gallus (Chicken).